A 98-amino-acid polypeptide reads, in one-letter code: NADH-ubiquinone oxidoreductase chain 4L (98 aa).

3 consecutive transmembrane segments (helical) span residues Met-1–Ile-21, Ser-28–Ile-48, and Ala-59–Val-79.

It belongs to the complex I subunit 4L family. Core subunit of respiratory chain NADH dehydrogenase (Complex I) which is composed of 45 different subunits.

The protein localises to the mitochondrion inner membrane. The enzyme catalyses a ubiquinone + NADH + 5 H(+)(in) = a ubiquinol + NAD(+) + 4 H(+)(out). In terms of biological role, core subunit of the mitochondrial membrane respiratory chain NADH dehydrogenase (Complex I) which catalyzes electron transfer from NADH through the respiratory chain, using ubiquinone as an electron acceptor. Part of the enzyme membrane arm which is embedded in the lipid bilayer and involved in proton translocation. This is NADH-ubiquinone oxidoreductase chain 4L (MT-ND4L) from Pseudocheirus peregrinus (Common ring-tailed possum).